The following is a 150-amino-acid chain: MKELLRLKHCKHLLTTHVHSPWTPSLTLTPSLLTLDTLTHPRHRHSSPWTPHSAPWTPSLTLDTFTHPDTLTHPGHPHSPWIPSLLTLDTLTHPGYPHSSPWTLSLTLTPSILTLDSLTPHPGLPHSSPWTPSLLILDTLTQPGHPHSSP.

Expressed in placental syncytiotrophoblast and choriocarcinoma cells.

The chain is Placenta-specific protein 4 (PLAC4) from Homo sapiens (Human).